Reading from the N-terminus, the 1103-residue chain is Detocs histidine-protein kinase DtcA (1103 aa).

Phosphohistidine; by autocatalysis is present on His-758. The stretch at 818–851 (TIINDAKEKVHINTGEFIESAKVFNYAIEIEFVE) is one TPR repeat.

Autophosphorylated.

The catalysed reaction is ATP + protein L-histidine = ADP + protein N-phospho-L-histidine.. In terms of biological role, sensor-kinase member of the two-component regulatory system Detocs that confers resistance to bacteriophage. When the system (DtcA-DtcB-DtcC) is expressed in a susceptible E.coli (strain MG1655) it confers resistance to bacteriophages T2, T4, T5, T7, SECphi4, SECphi6 and SECphi27; the level of resistance varies, resistance to T2, T7 and SECphi4 is not very high. DtcA (this subunit) probably autophosphorylates upon sensing viral infection, and subsequently transfers the phosphate signal to DtcC which activates it, leading to an antiviral defense; DtcB may scavenge phosphorylation signals from accidental activation of DtcA. The chain is Detocs histidine-protein kinase DtcA from Enterobacter cloacae (strain JD6301).